Reading from the N-terminus, the 2476-residue chain is Zonadhesin (2476 aa).

A signal peptide spans 1 to 29 (MLGLPALAGPMAMPHPPLIPSTPTLLAFS). Residues 30-2418 (FPGGFYMLLD…SPKKPEASNR (2389 aa)) are Extracellular-facing. MAM domains follow at residues 31 to 144 (PGGF…PCEE) and 147 to 312 (PQCD…TCRG). Residues Asn109 and Asn269 are each glycosylated (N-linked (GlcNAc...) asparagine). Disordered stretches follow at residues 313-332 (PSET…KPTV), 358-462 (PTVP…TERT), and 537-632 (ERTT…RTTI). Residues 319–687 (STEKPVAPTE…ATTVTPRTTI (369 aa)) are 53 X approximate heptapeptide repeats (mucin-like domain). Low complexity predominate over residues 358–373 (PTVPTEKPTIPTEKST). Residues 400 to 412 (TTPPEGPAVPPKG) show a composition bias toward pro residues. A compositionally biased stretch (basic and acidic residues) spans 423–433 (HTEKSTVHTEK). A compositionally biased stretch (low complexity) spans 451–462 (PTKRTTTPTERT). The 50-residue stretch at 690-739 (CPPNAHFERCACPVSCQSPTPNCELFCKPGCVCDPGFLFSGSHCVNASSC) folds into the TIL 1 domain. N-linked (GlcNAc...) asparagine glycans are attached at residues Asn735, Asn758, and Asn833. The VWFC 1 domain maps to 740–794 (DCFYNDNYYKLGTDWFSPNCTEHCHCRPSSRMECQTFKCGTHTVCQLKNGQYGCH). The VWFD 1 domain occupies 799–976 (ATCSVYGDPH…TSEDADQQCE (178 aa)). Disulfide bonds link Cys801-Cys936 and Cys823-Cys975. A disordered region spans residues 943-983 (SSNDNQKPDGSPAKDEKELGSSWQTSEDADQQCEENQVSPP). The TIL 2 domain maps to 1070-1123 (CPRNSRYTLCARLCPDTCHSEFSGRACKDRCVEGCECDPGFVLSGLQCVSRSEC). The 57-residue stretch at 1124 to 1180 (GCLDSTAGYVKVGERWFKPGCRQLCICEGNNRTRCVLWRCQAQEFCGQQDGIYGCHA) folds into the VWFC 2 domain. Asn1154 is a glycosylation site (N-linked (GlcNAc...) asparagine). Positions 1184 to 1364 (ATCTVSGDPH…INELSEPGCF (181 aa)) constitute a VWFD 2 domain. Disulfide bonds link Cys1186–Cys1324 and Cys1208–Cys1363. 2 N-linked (GlcNAc...) asparagine glycosylation sites follow: Asn1329 and Asn1448. Positions 1456–1511 (CPSGSSYSTCANPCPATCLSLNNPSYCPSTLPCAEGCECQKGHILSGTSCVPLSQC) constitute a TIL 3 domain. In terms of domain architecture, VWFC 3 spans 1512-1568 (GCTTQRGSYHPVGESWYTDNSCSRLCTCSAHNNISCRQASCKPSQMCWPQDGLIRCR). N-linked (GlcNAc...) asparagine glycans are attached at residues Asn1544, Asn1596, and Asn1654. Positions 1573–1751 (GVCRIPDTSH…RDKEIDPNCQ (179 aa)) constitute a VWFD 3 domain. Disulfide bonds link Cys1575-Cys1712 and Cys1597-Cys1750. Residues 1747 to 1759 (DPNCQEDDRKTEA) are compositionally biased toward basic and acidic residues. A disordered region spans residues 1747-1768 (DPNCQEDDRKTEAESQEQPSAN). Asn1843 is a glycosylation site (N-linked (GlcNAc...) asparagine). The 57-residue stretch at 1851-1907 (CSAHSVYTSCVPSCLPSCQDPEGQCTGAGAPSTCEEGCICEPGYVLSEQQCVARSQC) folds into the TIL 4 domain. A VWFC 4 domain is found at 1908–1963 (GCRDARGTFLPVGRFRLSSGCSQMCVCTAGAIECRPFTCPSGSQCEPNEDGKDFCQ). N-linked (GlcNAc...) asparagine glycosylation is present at Asn1965. In terms of domain architecture, VWFD 4 spans 1968 to 2145 (NLCSVFGDPH…WEVKAKEGHP (178 aa)). A disulfide bridge connects residues Cys1970 and Cys2107. Asn2122, Asn2165, and Asn2178 each carry an N-linked (GlcNAc...) asparagine glycan. The TIL 5 domain maps to 2257 to 2310 (CPANTVYQSCMTPCPASCATLAVPRACDGPCVEGCASLPGYIYSGAQSLPMAHC). Residues 2311–2365 (GCTNNGVYYQQGDSFVTENCSQRCTCASSGVLLCEPLSCRPGEICTLGNLTRGCF) form the VWFC 5 domain. N-linked (GlcNAc...) asparagine glycans are attached at residues Asn2329 and Asn2359. The 37-residue stretch at 2366–2402 (RDSPCLQNPCQNDGRCREQGTHFTCECELGYGGDLCT) folds into the EGF-like domain. 3 disulfide bridges follow: Cys2370/Cys2381, Cys2375/Cys2390, and Cys2392/Cys2401. A helical transmembrane segment spans residues 2419 to 2439 (VAILLGMLMPTVLLVPAVTRV). The segment at 2438–2476 (RVSRKRRRRRRPSRERTQSQNRGKRAGTDCAPEQAYKVA) is disordered. The segment covering 2439 to 2450 (VSRKRRRRRRPS) has biased composition (basic residues). Residues 2440-2476 (SRKRRRRRRPSRERTQSQNRGKRAGTDCAPEQAYKVA) are Cytoplasmic-facing.

As to quaternary structure, probably forms covalent oligomers. Post-translationally, the MAM domains and the mucin-like domains are missing from the zonadhesin that binds to the egg extracellular matrix. Processing might occur during sperm maturation and/or capacitation. In testis, primarily in haploid spermatids. Not in lung, liver, heart, spleen, brain, kidney, epididymis.

It is found in the cell membrane. Functionally, binds in a species-specific manner to the zona pellucida of the egg. May be involved in gamete recognition and/or signaling. This is Zonadhesin (ZAN) from Sus scrofa (Pig).